A 125-amino-acid polypeptide reads, in one-letter code: Holo-[acyl-carrier-protein] synthase (125 aa).

Mg(2+)-binding residues include aspartate 8 and glutamate 57.

Belongs to the P-Pant transferase superfamily. AcpS family. Mg(2+) serves as cofactor.

It is found in the cytoplasm. The catalysed reaction is apo-[ACP] + CoA = holo-[ACP] + adenosine 3',5'-bisphosphate + H(+). Its function is as follows. Transfers the 4'-phosphopantetheine moiety from coenzyme A to a Ser of acyl-carrier-protein. In Halothermothrix orenii (strain H 168 / OCM 544 / DSM 9562), this protein is Holo-[acyl-carrier-protein] synthase.